The following is a 64-amino-acid chain: Putative calcium channel toxin Tx758 (64 aa).

Residues 1–18 (MSTFVIVFLLLTAVLCHA) form the signal peptide. A propeptide spanning residues 19–27 (EPALDETAR) is cleaved from the precursor. 3 disulfides stabilise this stretch: cysteine 29–cysteine 43, cysteine 36–cysteine 49, and cysteine 42–cysteine 58.

It belongs to the scorpion calcin-like family. In terms of tissue distribution, expressed by the venom gland.

The protein resides in the secreted. May increase intracellular calcium release through the activation of nuclear inositol 1,4,5-trisphosphate receptors (ITPR) of cardiomyocytes, thereby causing an increase in the contraction frequency of these cells. The chain is Putative calcium channel toxin Tx758 from Buthus israelis (Israeli scorpion).